Reading from the N-terminus, the 631-residue chain is Nucleoside triphosphatase I (631 aa).

The Helicase ATP-binding domain maps to 42-204 (FLGLDSMHSL…TMLVNLLRPG (163 aa)). An ATP-binding site is contributed by 55–62 (HETGVGKT). The DEXH box motif lies at 141–144 (DECH). Residues 367 to 532 (KFIDVCLGIL…EFVQLFRVFK (166 aa)) form the Helicase C-terminal domain. A binding to the cap-specific mRNA (nucleoside-2'-O-)-methyltransferase region spans residues 457-524 (DIFILDMTWN…EIIQSKSKEF (68 aa)).

This sequence belongs to the helicase family. NPH I subfamily. In terms of assembly, monomer. Interacts (via C-terminus) with RAP94/OPG109 (via N-terminus). Interacts with the cap-specific mRNA (nucleoside-2'-O-)-methyltransferase OPG102.

Its subcellular location is the virion. It carries out the reaction a ribonucleoside 5'-triphosphate + H2O = a ribonucleoside 5'-diphosphate + phosphate + H(+). Its function is as follows. DNA-dependent ATPase that acts as a 5' to 3' translocase on single-stranded DNA and thereby plays a role in transcription termination of viral early genes. Uses forward translocation in concert with the viral RNA polymerase RAP94/OPG109 subunit and the capping enzyme/VTF to catalyze release of UUUUUNU-containing nascent RNA from the elongation complex. In addition, acts as a positive elongation factor to assist transcription through problematic sequences. The chain is Nucleoside triphosphatase I (OPG123) from Bos taurus (Bovine).